The following is a 158-amino-acid chain: Transcription elongation factor GreA (158 aa).

This sequence belongs to the GreA/GreB family.

Its function is as follows. Necessary for efficient RNA polymerase transcription elongation past template-encoded arresting sites. The arresting sites in DNA have the property of trapping a certain fraction of elongating RNA polymerases that pass through, resulting in locked ternary complexes. Cleavage of the nascent transcript by cleavage factors such as GreA or GreB allows the resumption of elongation from the new 3'terminus. GreA releases sequences of 2 to 3 nucleotides. The sequence is that of Transcription elongation factor GreA from Ralstonia nicotianae (strain ATCC BAA-1114 / GMI1000) (Ralstonia solanacearum).